Reading from the N-terminus, the 79-residue chain is MEKMVKFNLRYDELLKKIPYKYAIPVVVAKRAEAIREYAKPFVITDDENPVSIAFMELSLNYIRIKNEEILKALIPKVK.

This sequence belongs to the RNA polymerase subunit omega family. As to quaternary structure, the RNAP catalytic core consists of 2 alpha, 1 beta, 1 beta' and 1 omega subunit. When a sigma factor is associated with the core the holoenzyme is formed, which can initiate transcription.

It carries out the reaction RNA(n) + a ribonucleoside 5'-triphosphate = RNA(n+1) + diphosphate. Functionally, promotes RNA polymerase assembly. Latches the N- and C-terminal regions of the beta' subunit thereby facilitating its interaction with the beta and alpha subunits. This Thermotoga petrophila (strain ATCC BAA-488 / DSM 13995 / JCM 10881 / RKU-1) protein is DNA-directed RNA polymerase subunit omega.